The sequence spans 159 residues: Ribosomal RNA large subunit methyltransferase H (159 aa).

S-adenosyl-L-methionine-binding positions include Leu76, Gly108, and 127–132; that span reads FGLLTL.

It belongs to the RNA methyltransferase RlmH family. As to quaternary structure, homodimer.

It localises to the cytoplasm. It catalyses the reaction pseudouridine(1915) in 23S rRNA + S-adenosyl-L-methionine = N(3)-methylpseudouridine(1915) in 23S rRNA + S-adenosyl-L-homocysteine + H(+). Its function is as follows. Specifically methylates the pseudouridine at position 1915 (m3Psi1915) in 23S rRNA. The sequence is that of Ribosomal RNA large subunit methyltransferase H from Streptococcus pyogenes serotype M18 (strain MGAS8232).